The following is a 94-amino-acid chain: Large ribosomal subunit protein uL23 (94 aa).

Belongs to the universal ribosomal protein uL23 family. Part of the 50S ribosomal subunit. Contacts protein L29, and trigger factor when it is bound to the ribosome.

In terms of biological role, one of the early assembly proteins it binds 23S rRNA. One of the proteins that surrounds the polypeptide exit tunnel on the outside of the ribosome. Forms the main docking site for trigger factor binding to the ribosome. This Geobacter sp. (strain M21) protein is Large ribosomal subunit protein uL23.